A 209-amino-acid chain; its full sequence is Transmembrane protein 52 (209 aa).

The N-terminal stretch at Met1–Gly32 is a signal peptide. The helical transmembrane segment at Val56–Val76 threads the bilayer. Positions Ala145–Pro209 are disordered. Residues Glu159–Gly170 show a composition bias toward basic and acidic residues. The span at Leu186–Pro202 shows a compositional bias: polar residues.

Its subcellular location is the membrane. This chain is Transmembrane protein 52 (TMEM52), found in Homo sapiens (Human).